Here is a 428-residue protein sequence, read N- to C-terminus: Enolase (428 aa).

Q163 contacts (2R)-2-phosphoglycerate. The active-site Proton donor is E205. 3 residues coordinate Mg(2+): D242, E286, and D313. The (2R)-2-phosphoglycerate site is built by K338, R367, S368, and K389. K338 serves as the catalytic Proton acceptor.

The protein belongs to the enolase family. It depends on Mg(2+) as a cofactor.

Its subcellular location is the cytoplasm. The protein resides in the secreted. The protein localises to the cell surface. It catalyses the reaction (2R)-2-phosphoglycerate = phosphoenolpyruvate + H2O. It participates in carbohydrate degradation; glycolysis; pyruvate from D-glyceraldehyde 3-phosphate: step 4/5. Catalyzes the reversible conversion of 2-phosphoglycerate (2-PG) into phosphoenolpyruvate (PEP). It is essential for the degradation of carbohydrates via glycolysis. This Acidovorax ebreus (strain TPSY) (Diaphorobacter sp. (strain TPSY)) protein is Enolase.